A 453-amino-acid polypeptide reads, in one-letter code: DDB1- and CUL4-associated factor 12 (453 aa).

Basic residues predominate over residues 1–12 (MARKVVSRKRKA). The interval 1–34 (MARKVVSRKRKAPASPGAGSDAQGPQFGWDHSLH) is disordered. Positions 1–38 (MARKVVSRKRKAPASPGAGSDAQGPQFGWDHSLHKRKR) are required for nuclear location and interaction with MOV10. Ser-15 bears the Phosphoserine mark. WD repeat units follow at residues 81-122 (EREF…TSQI), 123-175 (TKIP…TLDP), 176-242 (VCVG…ALKD), 243-286 (IPKE…NTLS), 287-331 (KLLS…SYNV), and 332-366 (KSVCSRERGSGIRSVSFYEHIITVGTGQGSLLFYD).

Belongs to the WD repeat DCAF12 family. As to quaternary structure, component of the DCX(DCAF12) E3 ubiquitin ligase complex, at least composed of CUL4 (CUL4A or CUL4B), DDB1, DCAF12 and RBX1. As to expression, highly expressed in lung cancer tissues and some cancer cell lines. Restricted expression in normal testis.

The protein localises to the cytoplasm. Its subcellular location is the cytoskeleton. It localises to the microtubule organizing center. The protein resides in the centrosome. It is found in the nucleus. It functions in the pathway protein modification; protein ubiquitination. Substrate-recognition component of a DCX (DDB1-CUL4-X-box) E3 ubiquitin-protein ligase complex of the DesCEND (destruction via C-end degrons) pathway, which recognizes a C-degron located at the extreme C terminus of target proteins, leading to their ubiquitination and degradation. The C-degron recognized by the DesCEND pathway is usually a motif of less than ten residues and can be present in full-length proteins, truncated proteins or proteolytically cleaved forms. The DCX(DCAF12) complex specifically recognizes proteins with a diglutamate (Glu-Glu) at the C-terminus, such as MAGEA3, MAGEA6 and CCT5, leading to their ubiquitination and degradation. Ubiquitination of MAGEA3, MAGEA6 by DCX(DCAF12) complex is required for starvation-induced autophagy. Also directly recognizes the C-terminal glutamate-leucine (Glu-Leu) degron as an alternative degron in proteins such as MOV10, leading to their ubiquitination and degradation. Controls the protein level of MOV10 during spermatogenesis and in T cells, especially after their activation. This Homo sapiens (Human) protein is DDB1- and CUL4-associated factor 12.